Consider the following 60-residue polypeptide: UPF0291 protein Nther_1806 (60 aa).

It belongs to the UPF0291 family.

Its subcellular location is the cytoplasm. In Natranaerobius thermophilus (strain ATCC BAA-1301 / DSM 18059 / JW/NM-WN-LF), this protein is UPF0291 protein Nther_1806.